The chain runs to 231 residues: Transmembrane protein 225 (231 aa).

The Cytoplasmic portion of the chain corresponds to 1–13 (MMRIPNRSIQAAN). A helical membrane pass occupies residues 14-34 (IFFSSGAILLLIAGLIMENWV). The Extracellular portion of the chain corresponds to 35-71 (ELIPKVRKDKVTHSPWLGCCPPFWPEESLEAIRRMMM). A helical transmembrane segment spans residues 72–92 (MSLNISIYLNLIIGLQFTYMI). Topologically, residues 93-99 (SQNKCVH) are cytoplasmic. Residues 100 to 120 (LLIGFLSFFTGCLLFYAIIVY) form a helical membrane-spanning segment. Residues 121 to 139 (HHKLNKGQYVYFVNYKTKW) are Extracellular-facing. A helical transmembrane segment spans residues 140 to 160 (IVFTIYLTIALFLTCGIFSFI). The Cytoplasmic segment spans residues 161 to 231 (QCTNRCACMK…LQSRRVTWAL (71 aa)). Residues 225–229 (RRVTW) carry the RVxF motif.

As to quaternary structure, interacts (via RVxF motif) with PPP1CC. In terms of tissue distribution, expressed in testis, specifically in spermatocytes and round spermatids.

The protein localises to the cytoplasmic vesicle. Its subcellular location is the secretory vesicle. It is found in the acrosome membrane. In terms of biological role, probably inhibits protein phosphatase 1 (PP1) in sperm via binding to catalytic subunit PPP1CC. The protein is Transmembrane protein 225 (Tmem225) of Rattus norvegicus (Rat).